The chain runs to 517 residues: Protein ERGIC-53 (517 aa).

A signal peptide spans 1–30; it reads MAVSRRRGPQAGAQSFFCALLLSFSQFVGS. Topologically, residues 31–484 are lumenal; the sequence is DGMGGDAAAP…DLPAFPSCLS (454 aa). One can recognise an L-type lectin-like domain in the interval 52 to 275; sequence RRFEYKYSFK…DVLSFLTFQL (224 aa). A carbohydrate contacts are provided by Ser96 and Asp129. Ca(2+) is bound by residues Asp160, Phe162, Asp163, Asn164, Asp165, Asn169, and Asn170. Asn164 provides a ligand contact to a carbohydrate. His186 is a binding site for a carbohydrate. Ca(2+) is bound at residue Asp189. A disulfide bridge links Cys198 with Cys238. Position 259 to 261 (259 to 261) interacts with a carbohydrate; sequence GGL. 2 disordered regions span residues 276–297 and 377–396; these read TEPG…KEKY and EISR…SQQE. Basic and acidic residues predominate over residues 278-297; that stretch reads PGKEPPTPEKDISEKEKEKY. Ser433 is modified (phosphoserine). A helical transmembrane segment spans residues 485–505; that stretch reads TVHFVIFIVVQTVLFIGYIMY. At 506-517 the chain is on the cytoplasmic side; that stretch reads RTQQEAAAKKFF. The mediates interaction with RAB3GAP1, RAB3GAP2 and UBXN6 stretch occupies residues 506–517; the sequence is RTQQEAAAKKFF. Positions 516–517 match the ER export motif motif; that stretch reads FF.

In terms of assembly, exists both as a covalent disulfide-linked homohexamer, and a complex of three disulfide-linked dimers non-covalently kept together. Interacts with MCFD2. May interact with TMEM115. Interacts with RAB3GAP1 and RAB3GAP2. Interacts with UBXN6. Interacts with SERPINA1/alpha1-antitrypsin. Interacts with BET1.

The protein resides in the endoplasmic reticulum-Golgi intermediate compartment membrane. It localises to the golgi apparatus membrane. The protein localises to the endoplasmic reticulum membrane. Mannose-specific lectin. May recognize sugar residues of glycoproteins, glycolipids, or glycosylphosphatidyl inositol anchors and may be involved in the sorting or recycling of proteins, lipids, or both. The LMAN1-MCFD2 complex forms a specific cargo receptor for the ER-to-Golgi transport of selected proteins. The chain is Protein ERGIC-53 (Lman1) from Rattus norvegicus (Rat).